Reading from the N-terminus, the 115-residue chain is Nucleoid-associated protein LBL_0065 (115 aa).

Belongs to the YbaB/EbfC family. Homodimer.

It is found in the cytoplasm. The protein resides in the nucleoid. In terms of biological role, binds to DNA and alters its conformation. May be involved in regulation of gene expression, nucleoid organization and DNA protection. The sequence is that of Nucleoid-associated protein LBL_0065 from Leptospira borgpetersenii serovar Hardjo-bovis (strain L550).